The chain runs to 279 residues: Energy-coupling factor transporter ATP-binding protein EcfA1 (279 aa).

One can recognise an ABC transporter domain in the interval 6-240 (VRLEHVFYKY…ADAMRAIGLG (235 aa)). 40 to 47 (GHNGSGKS) lines the ATP pocket.

This sequence belongs to the ABC transporter superfamily. Energy-coupling factor EcfA family. In terms of assembly, forms a stable energy-coupling factor (ECF) transporter complex composed of 2 membrane-embedded substrate-binding proteins (S component), 2 ATP-binding proteins (A component) and 2 transmembrane proteins (T component).

It is found in the cell membrane. Functionally, ATP-binding (A) component of a common energy-coupling factor (ECF) ABC-transporter complex. Unlike classic ABC transporters this ECF transporter provides the energy necessary to transport a number of different substrates. The chain is Energy-coupling factor transporter ATP-binding protein EcfA1 from Listeria innocua serovar 6a (strain ATCC BAA-680 / CLIP 11262).